Reading from the N-terminus, the 376-residue chain is Flagellin B (376 aa).

Residues 103–130 (SNSSSERQAIQEEVSALNDELNRIAETT) are a coiled coil.

The protein belongs to the bacterial flagellin family. As to quaternary structure, heteromer of multiple flagellin subunits including FlaA, FlaB, FlaC, FlaD and possibly FlaE.

It is found in the secreted. The protein resides in the bacterial flagellum. Its function is as follows. Flagellin is the subunit protein which polymerizes to form the filaments of bacterial flagella. FlaB is not essential for flagellar synthesis and motility. In Vibrio anguillarum (Listonella anguillarum), this protein is Flagellin B (flaB).